The primary structure comprises 336 residues: WAT1-related protein At2g37450 (336 aa).

The next 9 helical transmembrane spans lie at 7-27 (ALPF…DILT), 45-65 (HGVA…PVIA), 79-99 (TFAI…ALIF), 115-135 (VVGT…KGPA), 160-180 (GAVL…LQAI), 189-209 (LSLA…VALV), 227-247 (LTIT…GGVV), 255-275 (FVTA…SIIF), and 279-299 (MYLG…LVIW). 2 consecutive EamA domains span residues 63–126 (VIAQ…GGIM) and 169–298 (FSYA…YLVI).

It belongs to the drug/metabolite transporter (DMT) superfamily. Plant drug/metabolite exporter (P-DME) (TC 2.A.7.4) family.

The protein localises to the membrane. The protein is WAT1-related protein At2g37450 of Arabidopsis thaliana (Mouse-ear cress).